The primary structure comprises 318 residues: Aspartate carbamoyltransferase catalytic subunit (318 aa).

Positions 58 and 59 each coordinate carbamoyl phosphate. Lysine 86 serves as a coordination point for L-aspartate. Residues arginine 108, histidine 141, and glutamine 144 each coordinate carbamoyl phosphate. L-aspartate is bound by residues arginine 174 and arginine 226. Carbamoyl phosphate is bound by residues glycine 270 and proline 271.

Belongs to the aspartate/ornithine carbamoyltransferase superfamily. ATCase family. Heterododecamer (2C3:3R2) of six catalytic PyrB chains organized as two trimers (C3), and six regulatory PyrI chains organized as three dimers (R2).

The enzyme catalyses carbamoyl phosphate + L-aspartate = N-carbamoyl-L-aspartate + phosphate + H(+). The protein operates within pyrimidine metabolism; UMP biosynthesis via de novo pathway; (S)-dihydroorotate from bicarbonate: step 2/3. Functionally, catalyzes the condensation of carbamoyl phosphate and aspartate to form carbamoyl aspartate and inorganic phosphate, the committed step in the de novo pyrimidine nucleotide biosynthesis pathway. In Lactobacillus helveticus (strain DPC 4571), this protein is Aspartate carbamoyltransferase catalytic subunit.